Here is a 159-residue protein sequence, read N- to C-terminus: Ribosomal RNA large subunit methyltransferase H (159 aa).

Residues Leu-76, Gly-108, and 127-132 (FSKMTF) each bind S-adenosyl-L-methionine.

This sequence belongs to the RNA methyltransferase RlmH family. As to quaternary structure, homodimer.

Its subcellular location is the cytoplasm. It carries out the reaction pseudouridine(1915) in 23S rRNA + S-adenosyl-L-methionine = N(3)-methylpseudouridine(1915) in 23S rRNA + S-adenosyl-L-homocysteine + H(+). In terms of biological role, specifically methylates the pseudouridine at position 1915 (m3Psi1915) in 23S rRNA. This chain is Ribosomal RNA large subunit methyltransferase H, found in Bifidobacterium longum (strain DJO10A).